We begin with the raw amino-acid sequence, 50 residues long: Monellin chain B (50 aa).

As to quaternary structure, heterodimer of an A chain and a B chain.

Taste-modifying protein; intensely sweet-tasting protein. The sequence is that of Monellin chain B from Dioscoreophyllum cumminsii (Serendipity berry).